The following is a 401-amino-acid chain: Cysteine desulfurase (401 aa).

Residues 72–73, asparagine 151, glutamine 179, and 199–201 each bind pyridoxal 5'-phosphate; these read AT and SAH. Lysine 202 carries the N6-(pyridoxal phosphate)lysine modification. Residue threonine 237 participates in pyridoxal 5'-phosphate binding. Cysteine 324 acts as the Cysteine persulfide intermediate in catalysis. Cysteine 324 serves as a coordination point for [2Fe-2S] cluster.

Belongs to the class-V pyridoxal-phosphate-dependent aminotransferase family. NifS/IscS subfamily. As to quaternary structure, homodimer. The cofactor is pyridoxal 5'-phosphate.

The catalysed reaction is (sulfur carrier)-H + L-cysteine = (sulfur carrier)-SH + L-alanine. In terms of biological role, catalyzes the removal of elemental sulfur atoms from cysteine to produce alanine. Seems to participate in the biosynthesis of the nitrogenase metalloclusters by providing the inorganic sulfur required for the Fe-S core formation. The protein is Cysteine desulfurase of Enterobacter agglomerans (Erwinia herbicola).